A 334-amino-acid chain; its full sequence is D-aspartate oxidase 2 (334 aa).

FAD-binding residues include Asp-38, Lys-39, Ser-46, Gly-310, and Thr-315.

This sequence belongs to the DAMOX/DASOX family. It depends on FAD as a cofactor. As to expression, expressed in the intestinal cells, pharyngeal muscles, and body wall muscles in adult hermaphrodites.

The protein resides in the cytoplasm. It carries out the reaction D-aspartate + O2 + H2O = oxaloacetate + H2O2 + NH4(+). The catalysed reaction is D-glutamate + O2 + H2O = H2O2 + 2-oxoglutarate + NH4(+). Inhibited by thiolactomycin. In terms of biological role, selectively catalyzes the oxidative deamination of acidic amino acids. May play a role in the egg-laying events and early development of the worm, in addition to quality control of the germ cells. This is D-aspartate oxidase 2 (ddo-2) from Caenorhabditis elegans.